A 320-amino-acid polypeptide reads, in one-letter code: UV DNA damage endonuclease (320 aa).

It belongs to the uve1/UvsE family.

In terms of biological role, component in a DNA repair pathway. Removal of UV LIGHT damaged nucleotides. Recognizes pyrimidine dimers and cleave a phosphodiester bond immediately 5' to the lesion. The chain is UV DNA damage endonuclease from Bacillus velezensis (strain DSM 23117 / BGSC 10A6 / LMG 26770 / FZB42) (Bacillus amyloliquefaciens subsp. plantarum).